A 245-amino-acid chain; its full sequence is Chlorophyll a-b binding protein 1B-21, chloroplastic (245 aa).

A chloroplast-targeting transit peptide spans M1–M44. W48 provides a ligand contact to chlorophyll b. Positions 68, 87, and 90 each coordinate chlorophyll a. Residue R92 coordinates chlorophyll b. Residues W93 to V113 traverse the membrane as a helical segment. Residue L129 coordinates chlorophyll a. A helical transmembrane segment spans residues P132–A152. Residues V133, E153, and R156 each contribute to the chlorophyll b site. Positions 190, 191, 194, 196, 208, and 224 each coordinate chlorophyll a.

It belongs to the light-harvesting chlorophyll a/b-binding (LHC) protein family. As to quaternary structure, the LHC complex consists of chlorophyll a-b binding proteins. Requires Binds at least 14 chlorophylls (8 Chl-a and 6 Chl-b) and carotenoids such as lutein and neoxanthin. as cofactor. Photoregulated by reversible phosphorylation of its threonine residues.

It localises to the plastid. The protein resides in the chloroplast thylakoid membrane. Its function is as follows. The light-harvesting complex (LHC) functions as a light receptor, it captures and delivers excitation energy to photosystems with which it is closely associated. This is Chlorophyll a-b binding protein 1B-21, chloroplastic (LHC Ib-21) from Hordeum vulgare (Barley).